The following is a 226-amino-acid chain: Beta-casein (226 aa).

Positions 1 to 51 (REKEELNVSSETVESLSSNEPDSSSEESITHINKEKSQKFKHEGQQQREVE) are disordered. A Phosphoserine modification is found at serine 9. Threonine 12 carries the phosphothreonine modification. Serine 15, serine 17, serine 18, and serine 25 each carry phosphoserine. The segment covering 28-51 (SITHINKEKSQKFKHEGQQQREVE) has biased composition (basic and acidic residues).

This sequence belongs to the beta-casein family. There are at least three different forms found in milk, with varying degrees of phosphorylation. These include form 5-P which is phosphorylated at three sites, this form is present in low amounts, form 6-P which is phosphorylated at six sites, and form 7-P which is phosphorylated at seven sites. In terms of tissue distribution, mammary gland specific. Secreted in milk.

It localises to the secreted. Functionally, important role in determination of the surface properties of the casein micelles. This Equus asinus (Donkey) protein is Beta-casein.